The chain runs to 461 residues: Siroheme synthase (461 aa).

The segment at 1–204 is precorrin-2 dehydrogenase /sirohydrochlorin ferrochelatase; the sequence is MRYLPLFVYL…GNFRKANRVI (204 aa). NAD(+) is bound by residues 22-23 and 43-44; these read IV and KT. S128 is modified (phosphoserine). Residues 218-461 are uroporphyrinogen-III C-methyltransferase; sequence GSVSLVGAGP…HNEISWFGNG (244 aa). Residue P227 coordinates S-adenosyl-L-methionine. D250 (proton acceptor) is an active-site residue. K272 serves as the catalytic Proton donor. S-adenosyl-L-methionine is bound by residues 303-305, I308, M386, and G415; that span reads GGD.

The protein in the N-terminal section; belongs to the precorrin-2 dehydrogenase / sirohydrochlorin ferrochelatase family. This sequence in the C-terminal section; belongs to the precorrin methyltransferase family.

It carries out the reaction uroporphyrinogen III + 2 S-adenosyl-L-methionine = precorrin-2 + 2 S-adenosyl-L-homocysteine + H(+). The enzyme catalyses precorrin-2 + NAD(+) = sirohydrochlorin + NADH + 2 H(+). The catalysed reaction is siroheme + 2 H(+) = sirohydrochlorin + Fe(2+). Its pathway is cofactor biosynthesis; adenosylcobalamin biosynthesis; precorrin-2 from uroporphyrinogen III: step 1/1. The protein operates within cofactor biosynthesis; adenosylcobalamin biosynthesis; sirohydrochlorin from precorrin-2: step 1/1. It participates in porphyrin-containing compound metabolism; siroheme biosynthesis; precorrin-2 from uroporphyrinogen III: step 1/1. It functions in the pathway porphyrin-containing compound metabolism; siroheme biosynthesis; siroheme from sirohydrochlorin: step 1/1. Its pathway is porphyrin-containing compound metabolism; siroheme biosynthesis; sirohydrochlorin from precorrin-2: step 1/1. Multifunctional enzyme that catalyzes the SAM-dependent methylations of uroporphyrinogen III at position C-2 and C-7 to form precorrin-2 via precorrin-1. Then it catalyzes the NAD-dependent ring dehydrogenation of precorrin-2 to yield sirohydrochlorin. Finally, it catalyzes the ferrochelation of sirohydrochlorin to yield siroheme. The sequence is that of Siroheme synthase from Blochmanniella floridana.